An 838-amino-acid polypeptide reads, in one-letter code: Probable glucan 1,3-beta-glucosidase D (838 aa).

Positions 1–23 (MPSHSRSRDRYRGRDESEPERDR) are enriched in basic and acidic residues. The disordered stretch occupies residues 1 to 298 (MPSHSRSRDR…GASDSDMDGA (298 aa)). Residues 1-310 (MPSHSRSRDR…GTPFWKKKKT (310 aa)) are Cytoplasmic-facing. Over residues 35-45 (DYEDDELDDDD) the composition is skewed to acidic residues. Basic and acidic residues-rich tracts occupy residues 111–124 (DSPRRRDRHRDGDR), 149–164 (SRDDRRERAYESEREA), 200–221 (AKLRSEYDKEDRSRAKADAKAE), and 234–246 (QPRRLDPFPEETP). Residues 311 to 331 (WIAVGVVVVLLAIIIPVAVVV) form a helical; Signal-anchor for type II membrane protein membrane-spanning segment. The Extracellular portion of the chain corresponds to 332–838 (SKKNNEKKSD…PDFGDLPENY (507 aa)). A disordered region spans residues 335–359 (NNEKKSDSTTDDTTPRNSNLDGISR). Asn383, Asn388, Asn400, Asn553, and Asn565 each carry an N-linked (GlcNAc...) asparagine glycan. Glu604 (proton donor) is an active-site residue. Residues Asn643 and Asn696 are each glycosylated (N-linked (GlcNAc...) asparagine). Glu709 acts as the Nucleophile in catalysis.

This sequence belongs to the glycosyl hydrolase 5 (cellulase A) family.

Its subcellular location is the cell membrane. The catalysed reaction is Successive hydrolysis of beta-D-glucose units from the non-reducing ends of (1-&gt;3)-beta-D-glucans, releasing alpha-glucose.. Glucosidase involved in the degradation of cellulosic biomass. Active on lichenan. This Aspergillus terreus (strain NIH 2624 / FGSC A1156) protein is Probable glucan 1,3-beta-glucosidase D (exgD).